We begin with the raw amino-acid sequence, 347 residues long: Ceramide very long chain fatty acid hydroxylase scs7 (347 aa).

Over 1-156 (MASVTSEKCV…GNFLEPLTKT (156 aa)) the chain is Cytoplasmic. The chain crosses the membrane as a helical span at residues 157-177 (PWYMIPLIWVPCVTYGFLYAC). A topological domain (lumenal) is located at residue Thr-178. The chain crosses the membrane as a helical span at residues 179–199 (GIPFSVAITFFIIGLFTWTLV). Residues 200–238 (EYTMHRFLFHLDEYTPDHPIFLTMHFAFHGCHHFLPADK) lie on the Cytoplasmic side of the membrane. Zn(2+)-binding residues include His-204, His-209, His-228, His-231, and His-232. The helical transmembrane segment at 239–259 (YRLVMPPALFLIFATPWYHFI) threads the bilayer. A topological domain (lumenal) is located at residue Gln-260. The helical transmembrane segment at 261–281 (LVLPHYIGVAGFSGAILGYVF) threads the bilayer. Over 282-347 (YDLTHYFLHH…EQGKISTKAK (66 aa)) the chain is Cytoplasmic. Positions 286, 290, 306, 309, and 310 each coordinate Zn(2+).

It belongs to the sterol desaturase family. SCS7 subfamily. The cofactor is Zn(2+).

It localises to the endoplasmic reticulum membrane. The protein operates within sphingolipid metabolism. Functionally, ceramide hydroxylase involved in the hydroxylation of sphingolipid-associated very long chain fatty acids. Postulated to hydroxylate the very long chain fatty acid of dihydroceramides and phytoceramides at C-2. The protein is Ceramide very long chain fatty acid hydroxylase scs7 of Schizosaccharomyces pombe (strain 972 / ATCC 24843) (Fission yeast).